Here is a 260-residue protein sequence, read N- to C-terminus: NAD-capped RNA hydrolase NudC (260 aa).

R74 serves as a coordination point for substrate. C103, C106, C121, and C124 together coordinate Zn(2+). Y129 contributes to the substrate binding site. In terms of domain architecture, Nudix hydrolase spans 130 to 253; that stretch reads PRIFPCIIVA…TIARALIEQT (124 aa). Positions 163, 179, and 183 each coordinate a divalent metal cation. The Nudix box signature appears at 164-185; the sequence is GFLEAGETLEDCVAREVHEETG. Position 197–204 (197–204) interacts with substrate; sequence QPWAFPSS. Residue E224 participates in a divalent metal cation binding. A substrate-binding site is contributed by A246.

The protein belongs to the Nudix hydrolase family. NudC subfamily. In terms of assembly, homodimer. Requires Mg(2+) as cofactor. Mn(2+) serves as cofactor. The cofactor is Zn(2+).

The enzyme catalyses a 5'-end NAD(+)-phospho-ribonucleoside in mRNA + H2O = a 5'-end phospho-adenosine-phospho-ribonucleoside in mRNA + beta-nicotinamide D-ribonucleotide + 2 H(+). It carries out the reaction NAD(+) + H2O = beta-nicotinamide D-ribonucleotide + AMP + 2 H(+). It catalyses the reaction NADH + H2O = reduced beta-nicotinamide D-ribonucleotide + AMP + 2 H(+). In terms of biological role, mRNA decapping enzyme that specifically removes the nicotinamide adenine dinucleotide (NAD) cap from a subset of mRNAs by hydrolyzing the diphosphate linkage to produce nicotinamide mononucleotide (NMN) and 5' monophosphate mRNA. The NAD-cap is present at the 5'-end of some mRNAs and stabilizes RNA against 5'-processing. Has preference for mRNAs with a 5'-end purine. Catalyzes the hydrolysis of a broad range of dinucleotide pyrophosphates. This chain is NAD-capped RNA hydrolase NudC, found in Vibrio parahaemolyticus serotype O3:K6 (strain RIMD 2210633).